Consider the following 423-residue polypeptide: Glycine amidinotransferase, mitochondrial (423 aa).

The N-terminal 43 residues, 1–43, are a transit peptide targeting the mitochondrion; it reads MLRVRCLRGGSRGAEAVHYIGSRLGRTLTGWVQRTFQSTQAAT. The disordered stretch occupies residues 43-63; sequence TASSRNSFAADDKATEPLPKD. A phosphoserine mark is found at Ser46 and Ser49. The span at 52–61 shows a compositional bias: basic and acidic residues; that stretch reads ADDKATEPLP. Asp170 serves as a coordination point for arginine. Catalysis depends on residues Asp254 and His303. Arginine-binding residues include Asp305, Arg322, Ser354, and Ser355. N6-acetyllysine is present on Lys385. Cys407 serves as the catalytic Amidino-cysteine intermediate.

This sequence belongs to the amidinotransferase family. Homodimer.

The protein localises to the mitochondrion inner membrane. It catalyses the reaction L-arginine + glycine = guanidinoacetate + L-ornithine. The enzyme catalyses 4-aminobutanoate + L-arginine = 4-guanidinobutanoate + L-ornithine. It carries out the reaction beta-alanine + L-arginine = 3-guanidinopropanoate + L-ornithine. The catalysed reaction is taurine + L-arginine = taurocyamine + L-ornithine. It functions in the pathway amine and polyamine biosynthesis; creatine biosynthesis; creatine from L-arginine and glycine: step 1/2. In terms of biological role, transamidinase that catalyzes the transfer of the amidino group of L-arginine onto the amino moiety of acceptor metabolites such as glycine, beta-alanine, gamma-aminobutyric acid (GABA) and taurine yielding the corresponding guanidine derivatives. Catalyzes the rate-limiting step of creatine biosynthesis, namely the transfer of the amidino group from L-arginine to glycine to generate guanidinoacetate, which is then methylated by GAMT to form creatine. Provides creatine as a source for ATP generation in tissues with high energy demands, in particular skeletal muscle, heart and brain. This is Glycine amidinotransferase, mitochondrial (GATM) from Macaca fascicularis (Crab-eating macaque).